A 238-amino-acid polypeptide reads, in one-letter code: HTH-type transcriptional regulator TreR (238 aa).

An HTH gntR-type domain is found at 1–71 (MKVNKFITIY…RGKGSVVLNR (71 aa)). The segment at residues 31–50 (EHELTAQYGTSRETVRKALH) is a DNA-binding region (H-T-H motif).

As to quaternary structure, dimer of dimers.

Its function is as follows. Repressor for the trePA operon. It is able to bind trehalose-6-phosphate. In Bacillus subtilis (strain 168), this protein is HTH-type transcriptional regulator TreR (treR).